The chain runs to 270 residues: Centromere protein Q (270 aa).

A disordered region spans residues 1 to 59 (MSGKANTSKKKSQRVKRNVKQRADKEDEELDSPENKVGNRAKRNRSHAGHLSSKEQTKC). 2 stretches are compositionally biased toward basic residues: residues 7–20 (TSKK…RNVK) and 39–48 (NRAKRNRSHA). Ser52 is modified (phosphoserine). Positions 143-205 (LKVEREQERA…EEEMKEVFHI (63 aa)) form a coiled coil.

This sequence belongs to the CENP-Q/OKP1 family. Component of the CENPA-CAD complex, composed of CENPI, CENPK, CENPL, CENPO, CENPP, CENPQ, CENPR and CENPS. The CENPA-CAD complex interacts with the CENPA-NAC complex, at least composed of CENPA, CENPC, CENPH, CENPM, CENPN, CENPT and CENPU. In terms of processing, phosphorylation at Ser-52 is essential for CENPE recruitment to kinetochores and orderly chromosome congression.

It localises to the nucleus. It is found in the chromosome. The protein localises to the centromere. Functionally, component of the CENPA-CAD (nucleosome distal) complex, a complex recruited to centromeres which is involved in assembly of kinetochore proteins, mitotic progression and chromosome segregation. May be involved in incorporation of newly synthesized CENPA into centromeres via its interaction with the CENPA-NAC complex. Plays an important role in chromosome congression and in the recruitment of CENP-O complex (which comprises CENPO, CENPP, CENPQ and CENPU), CENPE and PLK1 to the kinetochores. This Rattus norvegicus (Rat) protein is Centromere protein Q (Cenpq).